The sequence spans 231 residues: Probable intron-encoded endonuclease 1 (231 aa).

The protein belongs to the LAGLIDADG endonuclease family.

It localises to the mitochondrion. Functionally, endonuclease involved in mitochondrial 21S rRNA gene intron homing. In Wickerhamomyces canadensis (Yeast), this protein is Probable intron-encoded endonuclease 1.